Reading from the N-terminus, the 418-residue chain is Alpha-tubulin N-acetyltransferase 1 (418 aa).

Residues Met-1–Phe-186 form the N-acetyltransferase domain. Residues Phe-120–Lys-133 and Ser-156–Lys-165 each bind acetyl-CoA. Disordered stretches follow at residues Ser-237–Ser-292 and Gln-322–Asp-353. Basic and acidic residues predominate over residues Gln-277–Ser-287. Positions Arg-329–Asp-353 are enriched in polar residues.

Belongs to the acetyltransferase ATAT1 family.

It is found in the cytoplasm. The protein localises to the membrane. Its subcellular location is the clathrin-coated pit. The protein resides in the cell junction. It localises to the focal adhesion. It is found in the cell projection. The protein localises to the axon. Its subcellular location is the cytoskeleton. The protein resides in the spindle. The catalysed reaction is L-lysyl-[alpha-tubulin] + acetyl-CoA = N(6)-acetyl-L-lysyl-[alpha-tubulin] + CoA + H(+). Its function is as follows. Specifically acetylates 'Lys-40' in alpha-tubulin on the lumenal side of microtubules. Promotes microtubule destabilization and accelerates microtubule dynamics; this activity may be independent of acetylation activity. Acetylates alpha-tubulin with a slow enzymatic rate, due to a catalytic site that is not optimized for acetyl transfer. Enters the microtubule through each end and diffuses quickly throughout the lumen of microtubules. Acetylates only long/old microtubules because of its slow acetylation rate since it does not have time to act on dynamically unstable microtubules before the enzyme is released. May be involved in neuron development. The sequence is that of Alpha-tubulin N-acetyltransferase 1 from Xenopus laevis (African clawed frog).